Reading from the N-terminus, the 593-residue chain is Arginine--tRNA ligase (593 aa).

The 'HIGH' region motif lies at 138–148 (ANPTGPLHVGH).

It belongs to the class-I aminoacyl-tRNA synthetase family. Monomer.

Its subcellular location is the cytoplasm. The enzyme catalyses tRNA(Arg) + L-arginine + ATP = L-arginyl-tRNA(Arg) + AMP + diphosphate. This is Arginine--tRNA ligase from Burkholderia cenocepacia (strain ATCC BAA-245 / DSM 16553 / LMG 16656 / NCTC 13227 / J2315 / CF5610) (Burkholderia cepacia (strain J2315)).